The following is a 223-amino-acid chain: GTP cyclohydrolase 1 (223 aa).

Residues Cys-111, His-114, and Cys-182 each contribute to the Zn(2+) site.

The protein belongs to the GTP cyclohydrolase I family. In terms of assembly, homomer.

It catalyses the reaction GTP + H2O = 7,8-dihydroneopterin 3'-triphosphate + formate + H(+). It functions in the pathway cofactor biosynthesis; 7,8-dihydroneopterin triphosphate biosynthesis; 7,8-dihydroneopterin triphosphate from GTP: step 1/1. This is GTP cyclohydrolase 1 from Flavobacterium johnsoniae (strain ATCC 17061 / DSM 2064 / JCM 8514 / BCRC 14874 / CCUG 350202 / NBRC 14942 / NCIMB 11054 / UW101) (Cytophaga johnsonae).